We begin with the raw amino-acid sequence, 1522 residues long: Dicer-like protein 1 (1522 aa).

The segment covering 1–12 has biased composition (acidic residues); that stretch reads MTWAGDVEEQDD. The tract at residues 1 to 37 is disordered; it reads MTWAGDVEEQDDYFSCSDVSTSGDRRKRAPQTVTQEE. The Helicase ATP-binding domain occupies 76 to 258; that stretch reads LFLRAKMQNT…EHVREAAREL (183 aa). ATP is bound at residue 89–96; sequence LDTGTGKT. The DEAH box signature appears at 202–205; the sequence is DEAH. The 169-residue stretch at 408 to 576 folds into the Helicase C-terminal domain; that stretch reads WLNLYYERTT…DVEQEKAELI (169 aa). The 101-residue stretch at 600–700 folds into the Dicer dsRNA-binding fold domain; it reads SLSILSHFVA…LPTISKYLPA (101 aa). Positions 859–980 constitute a PAZ domain; sequence PFWKWSPQSR…ICPEPLHISN (122 aa). 2 consecutive RNase III domains span residues 995–1166 and 1222–1373; these read IIHR…MQHH and AHKI…VDSE. Mg(2+) is bound by residues glutamate 1262, aspartate 1359, and glutamate 1362. The region spanning 1409 to 1478 is the DRBM domain; the sequence is TRLSRLLSIN…SHAALEKLEG (70 aa). Zn(2+) contacts are provided by cysteine 1421, histidine 1449, cysteine 1490, and cysteine 1492.

The protein belongs to the helicase family. Dicer subfamily. It depends on Mg(2+) as a cofactor. The cofactor is Mn(2+).

Functionally, dicer-like endonuclease involved in cleaving double-stranded RNA in the RNA interference (RNAi) pathway. Produces 21 to 25 bp dsRNAs (siRNAs) which target the selective destruction of homologous RNAs leading to sequence-specific suppression of gene expression, called post-transcriptional gene silencing (PTGS). Part of a broad host defense response against viral infection and transposons. The polypeptide is Dicer-like protein 1 (DCL1) (Phaeosphaeria nodorum (strain SN15 / ATCC MYA-4574 / FGSC 10173) (Glume blotch fungus)).